The primary structure comprises 837 residues: Thioredoxin domain-containing protein 3 homolog (837 aa).

The region spanning 6-115 (EQIQLQKEIL…LKNVERELKQ (110 aa)) is the Thioredoxin domain. A disulfide bridge links Cys39 with Cys42. NDK regions lie at residues 201-345 (KEVT…SVPI), 355-491 (IEKT…FPKQ), and 493-629 (TLAV…EVLP). Positions 633–837 (VKDSVASISM…EEKTEEQTAS (205 aa)) are disordered. Polar residues predominate over residues 638–647 (ASISMEQSQV). Positions 652-670 (EEGGEEQTEQPAGEGEEQQ) are enriched in acidic residues. 3 stretches are compositionally biased toward low complexity: residues 671–707 (AEQP…PPAE), 718–752 (QQTQ…AEQT), and 766–787 (APAT…QQTQ). A compositionally biased stretch (gly residues) spans 805 to 819 (AGGGEEAVATEGGGE). A compositionally biased stretch (basic and acidic residues) spans 820–837 (GDAKPEGGEEKTEEQTAS).

The protein in the C-terminal section; belongs to the NDK family. Monomer. As to expression, testis-specific. In sperm, it is a component of the arm dynein of sperm axoneme.

Functionally, probably required during the final stages of sperm tail maturation in the testis and/or epididymis, where extensive disulfide bonding of fibrous sheath (FS) proteins occurs. In vitro, it has neither nucleoside diphosphate kinase (NDPK) activity nor reducing activity on disulfide bonds. Exhibits a 3'-5' exonuclease activity with a preference for single-stranded DNA, suggesting roles in DNA proofreading and repair. The sequence is that of Thioredoxin domain-containing protein 3 homolog (NME8) from Heliocidaris crassispina (Sea urchin).